The chain runs to 1391 residues: DNA-directed RNA polymerase subunit beta (1391 aa).

This sequence belongs to the RNA polymerase beta chain family. In terms of assembly, the RNAP catalytic core consists of 2 alpha, 1 beta, 1 beta' and 1 omega subunit. When a sigma factor is associated with the core the holoenzyme is formed, which can initiate transcription.

The catalysed reaction is RNA(n) + a ribonucleoside 5'-triphosphate = RNA(n+1) + diphosphate. In terms of biological role, DNA-dependent RNA polymerase catalyzes the transcription of DNA into RNA using the four ribonucleoside triphosphates as substrates. This chain is DNA-directed RNA polymerase subunit beta, found in Paramagnetospirillum magneticum (strain ATCC 700264 / AMB-1) (Magnetospirillum magneticum).